The chain runs to 35 residues: Photosystem II reaction center protein T (35 aa).

A helical membrane pass occupies residues 3–23; it reads ALVYTFLLVGTLGIIFFAIFF.

Belongs to the PsbT family. In terms of assembly, PSII is composed of 1 copy each of membrane proteins PsbA, PsbB, PsbC, PsbD, PsbE, PsbF, PsbH, PsbI, PsbJ, PsbK, PsbL, PsbM, PsbT, PsbY, PsbZ, Psb30/Ycf12, at least 3 peripheral proteins of the oxygen-evolving complex and a large number of cofactors. It forms dimeric complexes.

Its subcellular location is the plastid. It is found in the chloroplast thylakoid membrane. Found at the monomer-monomer interface of the photosystem II (PS II) dimer, plays a role in assembly and dimerization of PSII. PSII is a light-driven water plastoquinone oxidoreductase, using light energy to abstract electrons from H(2)O, generating a proton gradient subsequently used for ATP formation. The polypeptide is Photosystem II reaction center protein T (Chara vulgaris (Common stonewort)).